A 53-amino-acid chain; its full sequence is uncharacterized protein (53 aa).

Residues R34–R53 are disordered.

This is an uncharacterized protein from Treponema pallidum (strain Nichols).